We begin with the raw amino-acid sequence, 79 residues long: Large ribosomal subunit protein eL38 (79 aa).

The protein belongs to the eukaryotic ribosomal protein eL38 family.

This is Large ribosomal subunit protein eL38 (RPL38) from Theileria parva (East coast fever infection agent).